The sequence spans 205 residues: Small ribosomal subunit protein uS4 (205 aa).

Residues 21-47 (GRPKSPFNKRDYGPGQHGQGRKGKPSD) form a disordered region. The S4 RNA-binding domain occupies 94–154 (RRLDSVVYRA…DKSKQLAIID (61 aa)).

It belongs to the universal ribosomal protein uS4 family. In terms of assembly, part of the 30S ribosomal subunit. Contacts protein S5. The interaction surface between S4 and S5 is involved in control of translational fidelity.

One of the primary rRNA binding proteins, it binds directly to 16S rRNA where it nucleates assembly of the body of the 30S subunit. Functionally, with S5 and S12 plays an important role in translational accuracy. This chain is Small ribosomal subunit protein uS4, found in Pelagibacter ubique (strain HTCC1062).